A 325-amino-acid polypeptide reads, in one-letter code: Eukaryotic translation initiation factor 3 subunit I (325 aa).

WD repeat units follow at residues 1–39 (MKPILLQGHERSITQIKYNREGDLLFTVAKDPIVNVWYS), 43–81 (ERLGTYMGHTGAVWCVDADWDTKHVLTGSADNSCRLWDC), 87–127 (LALL…FFDL), 135–175 (NNEP…QYSA), and 180–217 (VLVNVKEHSRQINDIQLSRDMTMFVTASKDNTAKLFDS). Threonine 219 is modified (phosphothreonine). 2 WD repeats span residues 221–267 (EHQK…KFEA) and 275–316 (EEEF…YFDP). At lysine 264 the chain carries N6-acetyllysine. Residue lysine 282 forms a Glycyl lysine isopeptide (Lys-Gly) (interchain with G-Cter in ubiquitin) linkage. The residue at position 308 (tyrosine 308) is a Phosphotyrosine.

Component of the eukaryotic translation initiation factor 3 (eIF-3) complex, which is composed of 13 subunits: EIF3A, EIF3B, EIF3C, EIF3D, EIF3E, EIF3F, EIF3G, EIF3H, EIF3I, EIF3J, EIF3K, EIF3L and EIF3M. The eIF-3 complex appears to include 3 stable modules: module A is composed of EIF3A, EIF3B, EIF3G and EIF3I; module B is composed of EIF3F, EIF3H, and EIF3M; and module C is composed of EIF3C, EIF3D, EIF3E, EIF3K and EIF3L. EIF3C of module C binds EIF3B of module A and EIF3H of module B, thereby linking the three modules. EIF3J is a labile subunit that binds to the eIF-3 complex via EIF3B. The eIF-3 complex interacts with RPS6KB1 under conditions of nutrient depletion. Mitogenic stimulation leads to binding and activation of a complex composed of MTOR and RPTOR, leading to phosphorylation and release of RPS6KB1 and binding of EIF4B to eIF-3. Phosphorylated by TGF-beta type II receptor.

The protein localises to the cytoplasm. Functionally, component of the eukaryotic translation initiation factor 3 (eIF-3) complex, which is required for several steps in the initiation of protein synthesis. The eIF-3 complex associates with the 40S ribosome and facilitates the recruitment of eIF-1, eIF-1A, eIF-2:GTP:methionyl-tRNAi and eIF-5 to form the 43S pre-initiation complex (43S PIC). The eIF-3 complex stimulates mRNA recruitment to the 43S PIC and scanning of the mRNA for AUG recognition. The eIF-3 complex is also required for disassembly and recycling of post-termination ribosomal complexes and subsequently prevents premature joining of the 40S and 60S ribosomal subunits prior to initiation. The eIF-3 complex specifically targets and initiates translation of a subset of mRNAs involved in cell proliferation, including cell cycling, differentiation and apoptosis, and uses different modes of RNA stem-loop binding to exert either translational activation or repression. The chain is Eukaryotic translation initiation factor 3 subunit I from Homo sapiens (Human).